A 56-amino-acid chain; its full sequence is Ovomucoid (56 aa).

The region spanning 6–56 (VDCSEYPKPACTLEYRPLCGSDNKTYANKCNFCNAVVESNGTLTLSHFGKC) is the Kazal-like domain. Cystine bridges form between cysteine 8/cysteine 38, cysteine 16/cysteine 35, and cysteine 24/cysteine 56. The N-linked (GlcNAc...) asparagine glycan is linked to asparagine 45.

It is found in the secreted. The sequence is that of Ovomucoid from Callipepla californica (California quail).